The primary structure comprises 192 residues: UPF0301 protein Bmul_2524/BMULJ_00714 (192 aa).

The protein belongs to the UPF0301 (AlgH) family.

The sequence is that of UPF0301 protein Bmul_2524/BMULJ_00714 from Burkholderia multivorans (strain ATCC 17616 / 249).